A 502-amino-acid polypeptide reads, in one-letter code: Na(+)/H(+) antiporter NhaB (502 aa).

A run of 11 helical transmembrane segments spans residues Ala-27–Leu-49, Pro-66–Phe-86, Val-95–Tyr-115, Ile-128–Leu-148, Thr-149–Ala-169, Phe-241–Ile-261, Ile-299–Leu-318, Phe-350–Ile-370, Met-394–Val-414, Ala-450–Ile-470, and Met-477–Tyr-497.

Belongs to the NhaB Na(+)/H(+) (TC 2.A.34) antiporter family.

It is found in the cell inner membrane. The enzyme catalyses 2 Na(+)(in) + 3 H(+)(out) = 2 Na(+)(out) + 3 H(+)(in). Its function is as follows. Na(+)/H(+) antiporter that extrudes sodium in exchange for external protons. The polypeptide is Na(+)/H(+) antiporter NhaB (Teredinibacter turnerae (strain ATCC 39867 / T7901)).